The sequence spans 131 residues: Superoxide dismutase [Ni] (131 aa).

A propeptide spanning residues 1-14 (MLSRLFAPKVTVSA) is cleaved from the precursor. 3 residues coordinate Ni(2+): H15, C16, and C20.

It belongs to the nickel superoxide dismutase family. In terms of assembly, homohexamer. The hexameric protein has a roughly the shape of a hollow sphere with an outer diameter of 60 angstroms and a large interior cavity. The cofactor is Ni(2+).

It is found in the cytoplasm. The enzyme catalyses 2 superoxide + 2 H(+) = H2O2 + O2. The chain is Superoxide dismutase [Ni] (sodN) from Streptomyces coelicolor (strain ATCC BAA-471 / A3(2) / M145).